Here is a 568-residue protein sequence, read N- to C-terminus: MSHSVEDIKSESRRLRGSLEQSLADAVTGALREDDQTLIKYHGSYQQDDRDIRDERRQQKLEPAYQFMIRTRTPGGVITPAQWLALDGIATRYANHSLRITTRQAFQFHGVIKRELKATMQAINATLIDTLAACGDVNRNVQVAANPLLSQAHATLYADAACVSEHLLPNTRAYYEIWLDEERVSGSGNEDEPIYGDRYLPRKFKIGFAAPPLNDVDVFANDLGFIAILRDGRLLGYNVSIGGGMGASHGDAQTWPRVANVIGFVTRDQLLDIATAVVTTQRDFGNRAVRKRARFKYTIDDHGLDTIVAEIARRAGFALQPAQPFAFEHNGDRYGWVEGEDGLWHLTLSLPAGRIADTDTATHLSGLRAIAQLNVGEFRMTPNQNLVIAGVPASERARVDALVAQYALDAGNRSASALARGAMACVALPTCGLAMAEAERYLPDFSAALQPLLQQHGLADTPIVLRLSGCPNGCSRPYLAEIALVGKAPGRYNLMLGGDRRGQRLNTLYRENITEPEILAALEPLLARYAAERDHANDEGFGDFLHRAGLIALPSYPTHRRLDLELLA.

[4Fe-4S] cluster is bound by residues Cys-425, Cys-431, Cys-470, and Cys-474. Residue Cys-474 coordinates siroheme.

Belongs to the nitrite and sulfite reductase 4Fe-4S domain family. In terms of assembly, alpha(8)-beta(8). The alpha component is a flavoprotein, the beta component is a hemoprotein. Siroheme is required as a cofactor. The cofactor is [4Fe-4S] cluster.

The enzyme catalyses hydrogen sulfide + 3 NADP(+) + 3 H2O = sulfite + 3 NADPH + 4 H(+). It participates in sulfur metabolism; hydrogen sulfide biosynthesis; hydrogen sulfide from sulfite (NADPH route): step 1/1. Its function is as follows. Component of the sulfite reductase complex that catalyzes the 6-electron reduction of sulfite to sulfide. This is one of several activities required for the biosynthesis of L-cysteine from sulfate. The sequence is that of Sulfite reductase [NADPH] hemoprotein beta-component from Xanthomonas oryzae pv. oryzae (strain MAFF 311018).